An 813-amino-acid chain; its full sequence is MGLPGSIVFLIMIHAFCAKKTPTNTLPSLLSLLGITDLPSLRLNILSLDGSANNQGSWVRDNTTFVYIGASSPANGVLFYMPTSHVQQMTFYKRPVSKLLASNNLIKFLNTGSYINHSFMTAMPPYRRNVQIPSDRSGLKLDDKDDAQPTGTNPPTELKNLKPIDVVNPEHRFILTSELTGTYVKHVCFVDPMDMLIPVDYAHIRTIIFGSDGAEVIMKIGITFASITISMKSAPPVELILSERARNISLIWPALKPYEPVDKFTRRPYLIYLLGPHMNASDMEIKSYINMIESVEESSNYDFQIAQTHAQLFIFAATPISDINDIYCFRVVTTRLFMSLVASVRNAFQSGYISFDEIIKTEANIKMITETLSTFALHSNPGTYFLLSGMHLRNENADIIKSLIRKTIINASKNTASLSILQHLYVLRSAYAFNISQESGNLGEHVSSISLELIIALHEESVRDTIAWNTSARHALYYAFASIFQRPPNEWDASRTARKALLFASSMCTEEHIVATELVIQEMYIKINVKNSPVHILDVYTPCVTALRMDISEHHHRLYAMSDVILHPVIEKYLENDSRGIDAEEELETKAELVITKLKTPLMRRLTIYASEVVTCSDADILEATALLVLPISGLGSYVVTRQLGIRGIVYNVDGVDVNNQLYITYVRLPCTTTAGNIVPMVLPRPLGSDCPYCGCVLLRYSTNGNLRHTIYISSQDLQRELIAGGNSSIRYFNPTIAQIYGTSLLLYPNGTIVRILAFESERVTIISATYVATATAGASIAISIAIITVRMRINNFRYNYHRYKKLSLYDDL.

A signal peptide spans 1 to 18; it reads MGLPGSIVFLIMIHAFCA. Residues 19–769 are Virion surface-facing; sequence KKTPTNTLPS…ESERVTIISA (751 aa). N62 and N116 each carry an N-linked (GlcNAc...) asparagine; by host glycan. Residues 135–159 form a disordered region; sequence DRSGLKLDDKDDAQPTGTNPPTELK. The segment covering 137 to 147 has biased composition (basic and acidic residues); it reads SGLKLDDKDDA. The segment at 212 to 273 is interaction with gL; sequence DGAEVIMKIG…FTRRPYLIYL (62 aa). Residues N247, N279, N410, N434, N469, N576, N727, and N750 are each glycosylated (N-linked (GlcNAc...) asparagine; by host). The helical transmembrane segment at 770 to 790 threads the bilayer; that stretch reads TYVATATAGASIAISIAIITV. The Intravirion portion of the chain corresponds to 791-813; the sequence is RMRINNFRYNYHRYKKLSLYDDL.

Belongs to the herpesviridae glycoprotein H family. Interacts with glycoprotein L (gL); this interaction is necessary for the correct processing and cell surface expression of gH. The heterodimer gH/gL seems to interact with gB trimers during fusion. N-glycosylated, O-glycosylated, and sialylated.

It is found in the virion membrane. It localises to the host cell membrane. The protein localises to the host endosome membrane. Its function is as follows. The heterodimer glycoprotein H-glycoprotein L is required for the fusion of viral and plasma membranes leading to virus entry into the host cell. Following initial binding to host receptor, membrane fusion is mediated by the fusion machinery composed of gB and the heterodimer gH/gL. May also be involved in the fusion between the virion envelope and the outer nuclear membrane during virion morphogenesis. The protein is Envelope glycoprotein H of Gallid herpesvirus 2 (strain RB-1b) (GaHV-2).